Consider the following 612-residue polypeptide: Alpha-glycerophosphate oxidase (612 aa).

21–49 (DLLIIGGGITGAGVALQAAASGLDTGLIE) contacts FAD. Residues 399 to 408 (ETSTSEKELD) are compositionally biased toward basic and acidic residues. The tract at residues 399 to 418 (ETSTSEKELDPSAVSRGSSF) is disordered.

Belongs to the FAD-dependent glycerol-3-phosphate dehydrogenase family. FAD serves as cofactor.

It is found in the cytoplasm. The enzyme catalyses sn-glycerol 3-phosphate + O2 = dihydroxyacetone phosphate + H2O2. This chain is Alpha-glycerophosphate oxidase (glpO), found in Streptococcus pyogenes serotype M6 (strain ATCC BAA-946 / MGAS10394).